Reading from the N-terminus, the 200-residue chain is Recombination protein RecR (200 aa).

The C4-type zinc-finger motif lies at Cys-59–Cys-74. The region spanning Arg-82–Pro-177 is the Toprim domain.

Belongs to the RecR family.

Functionally, may play a role in DNA repair. It seems to be involved in an RecBC-independent recombinational process of DNA repair. It may act with RecF and RecO. The sequence is that of Recombination protein RecR from Caulobacter vibrioides (strain ATCC 19089 / CIP 103742 / CB 15) (Caulobacter crescentus).